We begin with the raw amino-acid sequence, 329 residues long: Microtubule-associated protein RP/EB family member 1C (329 aa).

One can recognise a Calponin-homology (CH) domain in the interval 13 to 115 (FVGRSEILAW…FMQWMKKYCD (103 aa)). Residues 130-141 (REASKGGKEATK) are compositionally biased toward basic and acidic residues. Residues 130-203 (REASKGGKEA…SAKQSKPVPA (74 aa)) are disordered. The segment covering 174–185 (SNNTGTHHSSTG) has biased composition (low complexity). Residues 193 to 263 (PSAKQSKPVP…LYAADGEDVG (71 aa)) enclose the EB1 C-terminal domain. Positions 289 to 311 (KRKLIVNLDVDVAAITTLSPRQR) are required for nuclear localization.

It belongs to the MAPRE family. In terms of assembly, homodimer. In terms of tissue distribution, highly expressed in the root and shoot meristems, in guard cells of leaf stomata, pollen grains and pollen tubes.

Its subcellular location is the nucleus. It localises to the cytoplasm. The protein resides in the cytoskeleton. It is found in the spindle. The protein localises to the phragmoplast. Its function is as follows. Plant-specific EB1 subtype that functions preferentially at early stages of plant mitosis by regulating spindle positioning and chromosome segregation. Accumulates in the prophase nucleus and is required to maintain spindle bipolarity during premetaphase and/or metaphase and for efficient segregation of chromosomes at anaphase. May play a role in the dynamics of microtubule network in elongating pollen tubes. The protein is Microtubule-associated protein RP/EB family member 1C (EB1C) of Arabidopsis thaliana (Mouse-ear cress).